We begin with the raw amino-acid sequence, 766 residues long: Nucleolar complex protein 2 (766 aa).

Over residues 1 to 12 the composition is skewed to basic residues; it reads MKLATKKIKTLG. Disordered regions lie at residues 1-73, 100-154, and 674-766; these read MKLA…EELE, DTDD…DEED, and KTGV…LNEW. Positions 14-29 are enriched in basic and acidic residues; it reads SKPDLSKKKPAKDAIR. Polar residues predominate over residues 33-42; the sequence is PQTTSETKVT. Over residues 58 to 67 the composition is skewed to basic residues; that stretch reads KTTKKGFKKS. Positions 100–115 are enriched in acidic residues; the sequence is DTDDDDDEEGDEEDKE. At Thr101 the chain carries Phosphothreonine. A compositionally biased stretch (basic and acidic residues) spans 130–140; sequence EKYHKPSKDLE. The span at 141–154 shows a compositional bias: acidic residues; the sequence is VASDESDFEVDEED. Ser143, Ser146, Ser691, Ser693, and Ser705 each carry phosphoserine. Residues 706 to 720 are compositionally biased toward acidic residues; that stretch reads DDDDDEDVQEEEEVE. Basic and acidic residues predominate over residues 757–766; the sequence is IVKDLDLNEW.

It belongs to the NOC2 family.

The protein resides in the nucleus. This is Nucleolar complex protein 2 from Drosophila melanogaster (Fruit fly).